The chain runs to 455 residues: Fez family zinc finger protein 2 (455 aa).

The tract at residues 1–22 (MASSASLETMVPPACPRAGASP) is disordered. The Engrailed homology 1 repressor motif lies at 27-42 (TLAFSIERIMAKTSEP). C2H2-type zinc fingers lie at residues 272-294 (FTCEVCGKVFNAHYNLTRHMPVH), 300-322 (FVCKVCGKGFRQASTLCRHKIIH), 328-350 (HKCNQCGKAFNRSSTLNTHIRIH), 356-378 (FVCEFCGKGFHQKGNYKNHKLTH), 384-406 (YKCTICNKAFHQVYNLTFHMHTH), and 412-435 (FTCATCGKGFCRNFDLKKHVRKLH).

It belongs to the krueppel C2H2-type zinc-finger protein family. Highly expressed in neocortical layer V, moderately expressed in layer VI. Expressed in subcortically projecting neurons.

The protein resides in the nucleus. Transcription repressor. Required for the specification of corticospinal motor neurons and other subcerebral projection neurons. May play a role in layer and neuronal subtype-specific patterning of subcortical projections and axonal fasciculation. Controls the development of dendritic arborization and spines of large layer V pyramidal neurons. Plays a role in rostro-caudal patterning of the diencephalon and in prethalamic formation. The protein is Fez family zinc finger protein 2 (Fezf2) of Mus musculus (Mouse).